We begin with the raw amino-acid sequence, 509 residues long: Maturase K (509 aa).

It belongs to the intron maturase 2 family. MatK subfamily.

Its subcellular location is the plastid. The protein localises to the chloroplast. Functionally, usually encoded in the trnK tRNA gene intron. Probably assists in splicing its own and other chloroplast group II introns. This Ibicella lutea (Yellow unicorn-plant) protein is Maturase K.